The sequence spans 131 residues: Phosphomevalonate dehydratase small subunit (131 aa).

The Proton acceptor role is filled by serine 62.

This sequence belongs to the AcnX type II small subunit family. In terms of assembly, heterodimer composed of a large subunit (PMDh-L) and a small subunit (PMDh-S).

It carries out the reaction (R)-5-phosphomevalonate = (2E)-3-methyl-5-phosphooxypent-2-enoate + H2O. It functions in the pathway isoprenoid biosynthesis; isopentenyl diphosphate biosynthesis via mevalonate pathway. In terms of biological role, component of a hydro-lyase that catalyzes the dehydration of mevalonate 5-phosphate (MVA5P) to form trans-anhydromevalonate 5-phosphate (tAHMP). Involved in the archaeal mevalonate (MVA) pathway, which provides fundamental precursors for isoprenoid biosynthesis, such as isopentenyl diphosphate (IPP) and dimethylallyl diphosphate (DMAPP). This is Phosphomevalonate dehydratase small subunit from Methanothermobacter thermautotrophicus (strain ATCC 29096 / DSM 1053 / JCM 10044 / NBRC 100330 / Delta H) (Methanobacterium thermoautotrophicum).